A 710-amino-acid polypeptide reads, in one-letter code: Polyribonucleotide nucleotidyltransferase (710 aa).

Asp-488 and Asp-494 together coordinate Mg(2+). Residues 555–614 (PRIETITIPTDKIRDVIGSGGKVIREIVETTGAKVDVNDDGVIKVSSSDGASIKAALDWI) enclose the KH domain. The region spanning 624 to 692 (GQIYKGKVVK…DRGKVRLSMK (69 aa)) is the S1 motif domain.

The protein belongs to the polyribonucleotide nucleotidyltransferase family. Mg(2+) is required as a cofactor.

It is found in the cytoplasm. The catalysed reaction is RNA(n+1) + phosphate = RNA(n) + a ribonucleoside 5'-diphosphate. Functionally, involved in mRNA degradation. Catalyzes the phosphorolysis of single-stranded polyribonucleotides processively in the 3'- to 5'-direction. This chain is Polyribonucleotide nucleotidyltransferase, found in Maricaulis maris (strain MCS10) (Caulobacter maris).